Consider the following 115-residue polypeptide: 5-hydroxyisourate hydrolase (115 aa).

Residues 1–23 (MSGLTTHILDQASGKPAAGVGVR) are disordered. Positions 7, 45, and 112 each coordinate substrate.

This sequence belongs to the transthyretin family. 5-hydroxyisourate hydrolase subfamily. Homotetramer.

It carries out the reaction 5-hydroxyisourate + H2O = 5-hydroxy-2-oxo-4-ureido-2,5-dihydro-1H-imidazole-5-carboxylate + H(+). Catalyzes the hydrolysis of 5-hydroxyisourate (HIU) to 2-oxo-4-hydroxy-4-carboxy-5-ureidoimidazoline (OHCU). The chain is 5-hydroxyisourate hydrolase from Caulobacter vibrioides (strain ATCC 19089 / CIP 103742 / CB 15) (Caulobacter crescentus).